The following is a 283-amino-acid chain: Para-Rep C10 (283 aa).

The CRESS-DNA virus Rep endonuclease domain maps to 3 to 96; the sequence is SIRAIHWCFT…IDGPWEYGTW (94 aa). An RCR-1 motif is present at residues 10-13; the sequence is CFTL. Residues glutamate 36 and histidine 42 each coordinate a divalent metal cation. An RCR-2 motif is present at residues 42–44; sequence HLQ. A Nuclear localization signal motif is present at residues 51-71; that stretch reads KQTTLKKMKELLPGAHLEMAR. Residue tyrosine 79 is the For DNA cleavage activity of the active site. Positions 79–82 match the RCR-3 motif; that stretch reads YCQK. Glutamate 84 provides a ligand contact to a divalent metal cation. Positions 96-102 match the Nuclear localization signal motif; the sequence is WISTGSH. 172-180 provides a ligand contact to ATP; sequence GPHGGEGKS.

This sequence belongs to the nanoviridea/circoviridae replication-associated protein family. In terms of assembly, homooligomer (Potential). Rep binds to repeated DNA motifs (iterons). Mg(2+) is required as a cofactor. Mn(2+) serves as cofactor.

The protein resides in the host nucleus. The catalysed reaction is ATP + H2O = ADP + phosphate + H(+). In terms of biological role, initiates and terminates the replication only of its own subviral DNA molecule. The closed circular ssDNA genome is first converted to a superhelical dsDNA. Rep binds a specific hairpin at the genome origin of replication. Introduces an endonucleolytic nick within the intergenic region of the genome, thereby initiating the rolling circle replication (RCR). Following cleavage, binds covalently to the 5'-phosphate of DNA as a tyrosyl ester. The cleavage gives rise to a free 3'-OH that serves as a primer for the cellular DNA polymerase. The polymerase synthesizes the (+) strand DNA by rolling circle mechanism. After one round of replication, a Rep-catalyzed nucleotidyl transfer reaction releases a circular single-stranded virus genome, thereby terminating the replication. Displays origin-specific DNA cleavage, nucleotidyl transferase, ATPase and helicase activities. This is Para-Rep C10 (C10) from Milk vetch dwarf C10 alphasatellite (MVDC10A).